The primary structure comprises 192 residues: Large ribosomal subunit protein uL5 (192 aa).

The protein belongs to the universal ribosomal protein uL5 family. As to quaternary structure, part of the 50S ribosomal subunit; part of the 5S rRNA/L5/L18/L25 subcomplex. Contacts the 5S rRNA and the P site tRNA. Forms a bridge to the 30S subunit in the 70S ribosome.

Functionally, this is one of the proteins that bind and probably mediate the attachment of the 5S RNA into the large ribosomal subunit, where it forms part of the central protuberance. In the 70S ribosome it contacts protein S13 of the 30S subunit (bridge B1b), connecting the 2 subunits; this bridge is implicated in subunit movement. Contacts the P site tRNA; the 5S rRNA and some of its associated proteins might help stabilize positioning of ribosome-bound tRNAs. The chain is Large ribosomal subunit protein uL5 from Sphingopyxis alaskensis (strain DSM 13593 / LMG 18877 / RB2256) (Sphingomonas alaskensis).